We begin with the raw amino-acid sequence, 101 residues long: Large ribosomal subunit protein bL20 (101 aa).

The protein belongs to the bacterial ribosomal protein bL20 family.

In terms of biological role, binds directly to 23S ribosomal RNA and is necessary for the in vitro assembly process of the 50S ribosomal subunit. It is not involved in the protein synthesizing functions of that subunit. This chain is Large ribosomal subunit protein bL20 (rplT), found in Carsonella ruddii (strain PV).